The following is a 215-amino-acid chain: Adenylate kinase (215 aa).

10 to 15 (GAGKGT) is an ATP binding site. An NMP region spans residues 30 to 59 (STGDILRDAVSKGTELGKMAKAIMDRGELV). Residues Thr31, Arg36, 57 to 59 (ELV), 82 to 85 (GYPR), and Gln89 contribute to the AMP site. Positions 123–160 (NRRVCPNCGKVYNLITLQPKEDEKCDVCGTKLIQRDDD) are LID. Arg124 serves as a coordination point for ATP. Zn(2+)-binding residues include Cys127 and Cys130. 133 to 134 (VY) contributes to the ATP binding site. Residues Cys147 and Cys150 each coordinate Zn(2+). The AMP site is built by Arg157 and Arg168. ATP is bound at residue Gln196.

The protein belongs to the adenylate kinase family. Monomer.

It is found in the cytoplasm. It catalyses the reaction AMP + ATP = 2 ADP. It functions in the pathway purine metabolism; AMP biosynthesis via salvage pathway; AMP from ADP: step 1/1. Functionally, catalyzes the reversible transfer of the terminal phosphate group between ATP and AMP. Plays an important role in cellular energy homeostasis and in adenine nucleotide metabolism. The polypeptide is Adenylate kinase (Petrotoga mobilis (strain DSM 10674 / SJ95)).